The chain runs to 212 residues: Cell division protein SepF (212 aa).

A disordered region spans residues 32 to 104 (RYADPDTSYD…APLGSDAHRE (73 aa)). Residues 64 to 73 (EAEEDGGDYG) show a composition bias toward acidic residues.

Belongs to the SepF family. As to quaternary structure, homodimer. Interacts with FtsZ.

Its subcellular location is the cytoplasm. In terms of biological role, cell division protein that is part of the divisome complex and is recruited early to the Z-ring. Probably stimulates Z-ring formation, perhaps through the cross-linking of FtsZ protofilaments. Its function overlaps with FtsA. This Saccharopolyspora erythraea (strain ATCC 11635 / DSM 40517 / JCM 4748 / NBRC 13426 / NCIMB 8594 / NRRL 2338) protein is Cell division protein SepF.